Reading from the N-terminus, the 227-residue chain is General transcription factor 3C polypeptide 6 (227 aa).

A disordered region spans residues 157–227 (DEAAGPASDK…DGNVSQNNQS (71 aa)). Residues 186-195 (EQEKVEHSEV) show a composition bias toward basic and acidic residues. A compositionally biased stretch (polar residues) spans 203 to 227 (ETPSEMESSVFMGTQDGNVSQNNQS).

Belongs to the TFIIIC subunit 6 family. As to quaternary structure, part of the TFIIIC subcomplex TFIIIC2, consisting of six subunits, GTF3C1, GTF3C2, GTF3C3, GTF3C4, GTF3C5 and GTF3C6. Interacts with GTF3C4 and GTF3C5.

It is found in the nucleus. Functionally, involved in RNA polymerase III-mediated transcription. Integral, tightly associated component of the DNA-binding TFIIIC2 subcomplex that directly binds tRNA and virus-associated RNA promoters. The chain is General transcription factor 3C polypeptide 6 from Mus musculus (Mouse).